We begin with the raw amino-acid sequence, 360 residues long: Peptide chain release factor 1 (360 aa).

Glutamine 234 carries the post-translational modification N5-methylglutamine.

This sequence belongs to the prokaryotic/mitochondrial release factor family. Post-translationally, methylated by PrmC. Methylation increases the termination efficiency of RF1.

The protein resides in the cytoplasm. In terms of biological role, peptide chain release factor 1 directs the termination of translation in response to the peptide chain termination codons UAG and UAA. This Clostridium botulinum (strain Eklund 17B / Type B) protein is Peptide chain release factor 1.